The chain runs to 362 residues: Chalcone synthase A (362 aa).

The active site involves C168.

It belongs to the thiolase-like superfamily. Chalcone/stilbene synthases family.

The enzyme catalyses (E)-4-coumaroyl-CoA + 3 malonyl-CoA + 3 H(+) = 2',4,4',6'-tetrahydroxychalcone + 3 CO2 + 4 CoA. It participates in secondary metabolite biosynthesis; flavonoid biosynthesis. In terms of biological role, the primary product of this enzyme is 4,2',4',6'-tetrahydroxychalcone (also termed naringenin-chalcone or chalcone) which can under specific conditions spontaneously isomerize into naringenin. This chain is Chalcone synthase A (CHSA), found in Ipomoea trifida (Morning glory).